The chain runs to 311 residues: Aspartate carbamoyltransferase catalytic subunit (311 aa).

Carbamoyl phosphate-binding residues include Arg55 and Thr56. Lys85 is a binding site for L-aspartate. Arg106, His135, and Gln138 together coordinate carbamoyl phosphate. Arg168 and Arg230 together coordinate L-aspartate. Carbamoyl phosphate-binding residues include Leu268 and Pro269.

It belongs to the aspartate/ornithine carbamoyltransferase superfamily. ATCase family. In terms of assembly, heterododecamer (2C3:3R2) of six catalytic PyrB chains organized as two trimers (C3), and six regulatory PyrI chains organized as three dimers (R2).

It catalyses the reaction carbamoyl phosphate + L-aspartate = N-carbamoyl-L-aspartate + phosphate + H(+). The protein operates within pyrimidine metabolism; UMP biosynthesis via de novo pathway; (S)-dihydroorotate from bicarbonate: step 2/3. In terms of biological role, catalyzes the condensation of carbamoyl phosphate and aspartate to form carbamoyl aspartate and inorganic phosphate, the committed step in the de novo pyrimidine nucleotide biosynthesis pathway. This Baumannia cicadellinicola subsp. Homalodisca coagulata protein is Aspartate carbamoyltransferase catalytic subunit.